A 437-amino-acid chain; its full sequence is Glutamate-1-semialdehyde 2,1-aminomutase (437 aa).

An N6-(pyridoxal phosphate)lysine modification is found at Lys277.

The protein belongs to the class-III pyridoxal-phosphate-dependent aminotransferase family. HemL subfamily. Homodimer. Pyridoxal 5'-phosphate serves as cofactor.

It localises to the cytoplasm. It carries out the reaction (S)-4-amino-5-oxopentanoate = 5-aminolevulinate. It participates in porphyrin-containing compound metabolism; protoporphyrin-IX biosynthesis; 5-aminolevulinate from L-glutamyl-tRNA(Glu): step 2/2. It functions in the pathway porphyrin-containing compound metabolism; chlorophyll biosynthesis. This is Glutamate-1-semialdehyde 2,1-aminomutase from Thermosynechococcus vestitus (strain NIES-2133 / IAM M-273 / BP-1).